The primary structure comprises 77 residues: U8-lycotoxin-Ls1t (77 aa).

An N-terminal signal peptide occupies residues 1–20 (MKLIIFTGLVPFAIVSLIEA). The propeptide occupies 21-26 (QAENEK).

This sequence belongs to the neurotoxin 19 (CSTX) family. 08 (U8-Lctx) subfamily. In terms of processing, contains 4 disulfide bonds. Expressed by the venom gland.

It is found in the secreted. In Lycosa singoriensis (Wolf spider), this protein is U8-lycotoxin-Ls1t.